The primary structure comprises 220 residues: Large ribosomal subunit protein uL10c (220 aa).

Residues 1-41 (MEVALLSFSSSLSPLCHQRISTLTPKTSNSPNYPRLPVIRS) constitute a chloroplast transit peptide.

It belongs to the universal ribosomal protein uL10 family. In terms of assembly, part of the 50S ribosomal subunit.

The protein localises to the plastid. The protein resides in the chloroplast. Its function is as follows. This protein binds directly to 23S ribosomal RNA. This is Large ribosomal subunit protein uL10c (RPL10) from Arabidopsis thaliana (Mouse-ear cress).